Here is a 277-residue protein sequence, read N- to C-terminus: uncharacterized protein (277 aa).

The tract at residues 256–277 (HTTTTTTSPSFTIPSNSSKGVS) is disordered.

In terms of biological role, this protein may be involved in virus assembly. Essential for virus function. This is an uncharacterized protein from Saccharolobus solfataricus (Sulfolobus solfataricus).